Reading from the N-terminus, the 294-residue chain is Aquaporin NIP2-2 (294 aa).

Transmembrane regions (helical) follow at residues 54 to 74 and 88 to 108; these read VISE…AASI and SVAG…ISGA. Residues 111-113 carry the NPA 1 motif; sequence NPA. A run of 3 helical transmembrane segments spans residues 129-151, 169-189, and 197-217; these read VPFY…KAVL, ALLI…AVAT, and LAGL…GPVS. Positions 222 to 224 match the NPA 2 motif; that stretch reads NPA. Residues 235–255 traverse the membrane as a helical segment; it reads VFTGLWIYFLGPVIGTLSGAW.

Belongs to the MIP/aquaporin (TC 1.A.8) family. NIP (TC 1.A.8.12) subfamily.

It localises to the membrane. Aquaporins facilitate the transport of water and small neutral solutes across cell membranes. The sequence is that of Aquaporin NIP2-2 (NIP2-2) from Zea mays (Maize).